Reading from the N-terminus, the 369-residue chain is Probable dual-specificity RNA methyltransferase RlmN (369 aa).

Glu108 (proton acceptor) is an active-site residue. The Radical SAM core domain maps to 114–357 (YPDRATVCIS…CTVRDTRGQE (244 aa)). Cys121 and Cys362 are disulfide-bonded. Positions 128, 132, and 135 each coordinate [4Fe-4S] cluster. S-adenosyl-L-methionine-binding positions include 183 to 184 (GE), Ser217, 240 to 242 (SLH), and Asn319. The S-methylcysteine intermediate role is filled by Cys362.

The protein belongs to the radical SAM superfamily. RlmN family. [4Fe-4S] cluster serves as cofactor.

The protein resides in the cytoplasm. It carries out the reaction adenosine(2503) in 23S rRNA + 2 reduced [2Fe-2S]-[ferredoxin] + 2 S-adenosyl-L-methionine = 2-methyladenosine(2503) in 23S rRNA + 5'-deoxyadenosine + L-methionine + 2 oxidized [2Fe-2S]-[ferredoxin] + S-adenosyl-L-homocysteine. The enzyme catalyses adenosine(37) in tRNA + 2 reduced [2Fe-2S]-[ferredoxin] + 2 S-adenosyl-L-methionine = 2-methyladenosine(37) in tRNA + 5'-deoxyadenosine + L-methionine + 2 oxidized [2Fe-2S]-[ferredoxin] + S-adenosyl-L-homocysteine. Its function is as follows. Specifically methylates position 2 of adenine 2503 in 23S rRNA and position 2 of adenine 37 in tRNAs. The sequence is that of Probable dual-specificity RNA methyltransferase RlmN from Saccharopolyspora erythraea (strain ATCC 11635 / DSM 40517 / JCM 4748 / NBRC 13426 / NCIMB 8594 / NRRL 2338).